The primary structure comprises 473 residues: Deoxyribodipyrimidine photo-lyase (473 aa).

Residues proline 2–isoleucine 134 enclose the Photolyase/cryptochrome alpha/beta domain. Residues asparagine 109 and glutamate 110 each contribute to the (6R)-5,10-methylene-5,6,7,8-tetrahydrofolate site. FAD is bound at residue tyrosine 224. DNA is bound at residue arginine 228. Threonine 236–serine 240 contacts FAD. Interaction with DNA regions lie at residues glutamate 276–tyrosine 283 and asparagine 343–arginine 344. FAD is bound at residue aspartate 374–aspartate 376. Glutamine 406 contributes to the DNA binding site.

This sequence belongs to the DNA photolyase class-1 family. Monomer. FAD serves as cofactor. The cofactor is (6R)-5,10-methylene-5,6,7,8-tetrahydrofolate.

It catalyses the reaction cyclobutadipyrimidine (in DNA) = 2 pyrimidine residues (in DNA).. Involved in repair of UV radiation-induced DNA damage. Catalyzes the light-dependent monomerization (300-600 nm) of cyclobutyl pyrimidine dimers (in cis-syn configuration), which are formed between adjacent bases on the same DNA strand upon exposure to ultraviolet radiation. The sequence is that of Deoxyribodipyrimidine photo-lyase (phrB) from Salmonella typhimurium (strain LT2 / SGSC1412 / ATCC 700720).